The primary structure comprises 85 residues: Conotoxin Cap15b (85 aa).

The N-terminal stretch at 1-23 (MEKLTFLILVATVLLTIHVLVQS) is a signal peptide. Positions 24 to 49 (DGDKHLKRRPKQYATKRLSALMRGHR) are excised as a propeptide. Glutamine 50 bears the Pyrrolidone carboxylic acid mark.

Belongs to the conotoxin O2 superfamily. In terms of processing, contains 4 disulfide bonds. In terms of tissue distribution, expressed by the venom duct.

The protein resides in the secreted. In Conus capitaneus (Captain cone), this protein is Conotoxin Cap15b.